The sequence spans 312 residues: Malate dehydrogenase (312 aa).

NAD(+) contacts are provided by residues 7-13 and Asp34; that span reads GAAGGIG. Substrate contacts are provided by Arg81 and Arg87. Residues Asn94 and 117 to 119 each bind NAD(+); that span reads ITN. Residues Asn119 and Arg153 each coordinate substrate. His177 functions as the Proton acceptor in the catalytic mechanism. Met227 is a binding site for NAD(+).

This sequence belongs to the LDH/MDH superfamily. MDH type 1 family. In terms of assembly, homodimer.

The enzyme catalyses (S)-malate + NAD(+) = oxaloacetate + NADH + H(+). Its function is as follows. Catalyzes the reversible oxidation of malate to oxaloacetate. In Shigella flexneri serotype 5b (strain 8401), this protein is Malate dehydrogenase.